The sequence spans 479 residues: Aspartyl/glutamyl-tRNA(Asn/Gln) amidotransferase subunit B (479 aa).

It belongs to the GatB/GatE family. GatB subfamily. As to quaternary structure, heterotrimer of A, B and C subunits.

The catalysed reaction is L-glutamyl-tRNA(Gln) + L-glutamine + ATP + H2O = L-glutaminyl-tRNA(Gln) + L-glutamate + ADP + phosphate + H(+). It carries out the reaction L-aspartyl-tRNA(Asn) + L-glutamine + ATP + H2O = L-asparaginyl-tRNA(Asn) + L-glutamate + ADP + phosphate + 2 H(+). Functionally, allows the formation of correctly charged Asn-tRNA(Asn) or Gln-tRNA(Gln) through the transamidation of misacylated Asp-tRNA(Asn) or Glu-tRNA(Gln) in organisms which lack either or both of asparaginyl-tRNA or glutaminyl-tRNA synthetases. The reaction takes place in the presence of glutamine and ATP through an activated phospho-Asp-tRNA(Asn) or phospho-Glu-tRNA(Gln). This is Aspartyl/glutamyl-tRNA(Asn/Gln) amidotransferase subunit B from Clostridium beijerinckii (strain ATCC 51743 / NCIMB 8052) (Clostridium acetobutylicum).